Here is a 181-residue protein sequence, read N- to C-terminus: Putative manganese efflux pump MntP (181 aa).

6 helical membrane passes run 3–23, 42–62, 63–83, 101–121, 124–144, and 160–180; these read LIFLSIALAMDSVAISMANGA, IFQAFMPVIGYFLGLAFVGFI, SYIDHYVAFAILLFLGIKMIK, LMLGAFATSLDALAVGITFSF, INIAIAAFVIGLVCFVLCVIA, and LVLGGVILILIGCKIIITHLI.

Belongs to the MntP (TC 9.B.29) family.

It localises to the cell inner membrane. In terms of biological role, probably functions as a manganese efflux pump. This Campylobacter fetus subsp. fetus (strain 82-40) protein is Putative manganese efflux pump MntP.